The chain runs to 542 residues: Chaperonin GroEL 2 (542 aa).

ATP is bound by residues 30-33 (TLGP), Lys-51, 87-91 (DGTTT), Gly-415, and Asp-496.

It belongs to the chaperonin (HSP60) family. As to quaternary structure, forms a cylinder of 14 subunits composed of two heptameric rings stacked back-to-back. Interacts with the co-chaperonin GroES.

It localises to the cytoplasm. It carries out the reaction ATP + H2O + a folded polypeptide = ADP + phosphate + an unfolded polypeptide.. In terms of biological role, together with its co-chaperonin GroES, plays an essential role in assisting protein folding. The GroEL-GroES system forms a nano-cage that allows encapsulation of the non-native substrate proteins and provides a physical environment optimized to promote and accelerate protein folding. The protein is Chaperonin GroEL 2 of Mesorhizobium japonicum (strain LMG 29417 / CECT 9101 / MAFF 303099) (Mesorhizobium loti (strain MAFF 303099)).